We begin with the raw amino-acid sequence, 364 residues long: Spermidine/putrescine import ATP-binding protein PotA (364 aa).

One can recognise an ABC transporter domain in the interval isoleucine 6–isoleucine 236. Residue glycine 38–threonine 45 participates in ATP binding.

This sequence belongs to the ABC transporter superfamily. Spermidine/putrescine importer (TC 3.A.1.11.1) family. In terms of assembly, the complex is composed of two ATP-binding proteins (PotA), two transmembrane proteins (PotB and PotC) and a solute-binding protein (PotD).

It localises to the cell inner membrane. It carries out the reaction ATP + H2O + polyamine-[polyamine-binding protein]Side 1 = ADP + phosphate + polyamineSide 2 + [polyamine-binding protein]Side 1.. Its function is as follows. Part of the ABC transporter complex PotABCD involved in spermidine/putrescine import. Responsible for energy coupling to the transport system. This Legionella pneumophila subsp. pneumophila (strain Philadelphia 1 / ATCC 33152 / DSM 7513) protein is Spermidine/putrescine import ATP-binding protein PotA.